We begin with the raw amino-acid sequence, 263 residues long: 3-methyl-2-oxobutanoate hydroxymethyltransferase (263 aa).

Residues aspartate 45 and aspartate 84 each contribute to the Mg(2+) site. Residues 45 to 46, aspartate 84, and lysine 112 contribute to the 3-methyl-2-oxobutanoate site; that span reads DS. Glutamate 114 contributes to the Mg(2+) binding site. Residue glutamate 181 is the Proton acceptor of the active site.

The protein belongs to the PanB family. Homodecamer; pentamer of dimers. It depends on Mg(2+) as a cofactor.

It localises to the cytoplasm. The enzyme catalyses 3-methyl-2-oxobutanoate + (6R)-5,10-methylene-5,6,7,8-tetrahydrofolate + H2O = 2-dehydropantoate + (6S)-5,6,7,8-tetrahydrofolate. The protein operates within cofactor biosynthesis; (R)-pantothenate biosynthesis; (R)-pantoate from 3-methyl-2-oxobutanoate: step 1/2. Catalyzes the reversible reaction in which hydroxymethyl group from 5,10-methylenetetrahydrofolate is transferred onto alpha-ketoisovalerate to form ketopantoate. The sequence is that of 3-methyl-2-oxobutanoate hydroxymethyltransferase from Chromohalobacter salexigens (strain ATCC BAA-138 / DSM 3043 / CIP 106854 / NCIMB 13768 / 1H11).